Consider the following 325-residue polypeptide: Aldo-keto reductase family 1 member A1 (325 aa).

Ala-2 carries the post-translational modification N-acetylalanine. Ser-4 is modified (phosphoserine). Residues Gly-11 to Gly-20, Thr-21, Trp-22, and Asp-45 contribute to the NADP(+) site. Tyr-50 acts as the Proton donor in catalysis. An N6-acetyllysine; alternate modification is found at Lys-127. Lys-127 is modified (N6-succinyllysine; alternate). Lys-145 is subject to N6-succinyllysine. The NADP(+) site is built by Ser-162, Asn-163, Ser-211, Leu-213, Ser-215, Ser-216, Lys-263, Ser-264, Val-265, Thr-266, Arg-269, Gln-272, and Asn-273. Position 211 is a phosphoserine (Ser-211).

Belongs to the aldo/keto reductase family. Monomer.

The protein localises to the cytoplasm. It is found in the cytosol. It localises to the apical cell membrane. The enzyme catalyses a primary alcohol + NADP(+) = an aldehyde + NADPH + H(+). It carries out the reaction glycerol + NADP(+) = D-glyceraldehyde + NADPH + H(+). It catalyses the reaction glycerol + NADP(+) = L-glyceraldehyde + NADPH + H(+). The catalysed reaction is L-gulonate + NADP(+) = aldehydo-D-glucuronate + NADPH + H(+). The enzyme catalyses L-gulono-1,4-lactone + NADP(+) = D-glucurono-3,6-lactone + NADPH + H(+). It carries out the reaction allyl alcohol + NADP(+) = acrolein + NADPH + H(+). It catalyses the reaction hydroxyacetone + NADP(+) = methylglyoxal + NADPH + H(+). The catalysed reaction is 3-deoxyfructose + NADP(+) = 3-deoxyglucosone + NADPH + H(+). The enzyme catalyses (R)-mevalonate + NADP(+) = (R)-mevaldate + NADPH + H(+). It carries out the reaction pyridine 3-methanol + NADP(+) = pyridine-3-carbaldehyde + NADPH + H(+). It catalyses the reaction S-nitroso-CoA + NADPH + H(+) = sulfinamide-CoA + NADP(+). The catalysed reaction is S-nitrosoglutathione + NADPH + H(+) = S-(hydroxysulfenamide)glutathione + NADP(+). Catalyzes the NADPH-dependent reduction of a wide variety of carbonyl-containing compounds to their corresponding alcohols. Displays enzymatic activity towards endogenous metabolites such as aromatic and aliphatic aldehydes, ketones, monosaccharides and bile acids, with a preference for negatively charged substrates, such as glucuronate and succinic semialdehyde. Plays an important role in ascorbic acid biosynthesis by catalyzing the reduction of D-glucuronic acid and D-glucurono-gamma-lactone. Functions as a detoxifiying enzyme by reducing a range of toxic aldehydes. Reduces methylglyoxal and 3-deoxyglucosone, which are present at elevated levels under hyperglycemic conditions and are cytotoxic. Involved also in the detoxification of lipid-derived aldehydes like acrolein. Plays a role in the activation of procarcinogens, such as polycyclic aromatic hydrocarbon trans-dihydrodiols, and in the metabolism of various xenobiotics and drugs. Also acts as an inhibitor of protein S-nitrosylation by mediating degradation of S-nitroso-coenzyme A (S-nitroso-CoA), a cofactor required to S-nitrosylate proteins. S-nitroso-CoA reductase activity is involved in reprogramming intermediary metabolism in renal proximal tubules, notably by inhibiting protein S-nitrosylation of isoform 2 of PKM (PKM2). Also acts as a S-nitroso-glutathione reductase by catalyzing the NADPH-dependent reduction of S-nitrosoglutathione. Displays no reductase activity towards retinoids. The sequence is that of Aldo-keto reductase family 1 member A1 (AKR1A1) from Sus scrofa (Pig).